Reading from the N-terminus, the 366-residue chain is 3-beta-hydroxysteroid dehydrogenase (366 aa).

Tyr154 (proton donor) is an active-site residue.

This sequence belongs to the 3-beta-HSD family.

It catalyses the reaction testosterone + NAD(+) = androst-4-ene-3,17-dione + NADH + H(+). It carries out the reaction testosterone + NADP(+) = androst-4-ene-3,17-dione + NADPH + H(+). Catalyzes the degradation of testosterone into androstenedione. This Mycolicibacterium neoaurum (Mycobacterium neoaurum) protein is 3-beta-hydroxysteroid dehydrogenase.